Reading from the N-terminus, the 497-residue chain is MNSLIPPPTSEQQMNMFRLRDKMSLLNAEFLKVINGYFTEKNHYDFSGTMKSYMDHVAQLKQIYKVDDDVAADMTVPRRTENSSESSGETVAPRKIAKAVRKNGTPKNPLNSTVFAASSPAATVASVPKFGDISVITKETPAPLAKTAEPLVAPAAPATARKRAIRGGGPLGGAESVVFKSGEDGQAATSSVKIPATTIKFPEPTKDFWTKKSDAPAAPSNSGSLFAFLGKDGDKPKETPKFSGFSFGKKPAEPSEEPKAADSTPKLTFGSPKEADLPKPASSLFGASPSKPLVFGGSSADSTTSAPKPFSALSTAASLFGSSSASTTTTATQPLSFGSSSTGGSSLFSGFAGLAQKAMENQNQAKPEGSGEDDEGEYVPPKVETVENQEPDAVLSSKVSVFKFTGKEYTKLGVGMLHIKDNDGKFSVLIRAATATGTVWLNSLCNKAMKATVVDAKGDRIRLTCPSSSTEMATMMIRFGTADGAKKFTDKILEVAV.

Disordered stretches follow at residues 76 to 95, 210 to 308, and 359 to 379; these read VPRRTENSSESSGETVAPRK, TKKS…SAPK, and MENQNQAKPEGSGEDDEGEYV. Composition is skewed to basic and acidic residues over residues 231-240 and 250-260; these read KDGDKPKETP and KPAEPSEEPKA. The segment at 390–497 is ranBD1; it reads EPDAVLSSKV…FTDKILEVAV (108 aa).

In terms of assembly, interacts with importin beta imb-1. Interacts with DNA-directed RNA polymerase III subunit rpc-1. Interacts with TATA-box-binding protein tbp-1. Interacts with GTF3C5 homolog tftc-5. Interacts with GTF3C3 homolog tftc-3.

The protein resides in the nucleus. It localises to the nuclear pore complex. Its subcellular location is the nucleus membrane. Component of the nuclear pore complex. Plays a direct role in nuclear protein import. Required for anoxia-induced prophase arrest; may function in concert with cdk-1 to arrest prophase blastomeres in response to anoxia. This Caenorhabditis elegans protein is Nuclear pore complex protein npp-16.